The chain runs to 254 residues: NFU1 iron-sulfur cluster scaffold homolog, mitochondrial (254 aa).

The N-terminal 9 residues, 1–9 (MAATARRGW), are a transit peptide targeting the mitochondrion. Residues 173-241 (IKELLDTRIR…IPEVEGVEQV (69 aa)) are nifU. 2 residues coordinate [4Fe-4S] cluster: Cys210 and Cys213.

The protein belongs to the NifU family. As to quaternary structure, monomer and homohexamer; the apo-NFU1 is a monomer, while the holo-NFU1 is a hexamer composed of a trimer of dimer that is probably linked by some 4Fe-4S cluster. Interacts with HIRA and EPM2A/laforin. Interacts with BOLA3. Interacts with HSPA9. Ubiquitous. Expression in adult lung is weak compared to fetal lung.

The protein resides in the mitochondrion. It localises to the cytoplasm. It is found in the cytosol. Functionally, iron-sulfur cluster scaffold protein which can assemble [4Fe-4S] clusters and deliver them to target proteins. This Homo sapiens (Human) protein is NFU1 iron-sulfur cluster scaffold homolog, mitochondrial (NFU1).